Consider the following 104-residue polypeptide: Elicitor peptide 6 (104 aa).

Positions methionine 1–arginine 81 are excised as a propeptide. A compositionally biased stretch (low complexity) spans serine 48–serine 61. A disordered region spans residues serine 48–asparagine 104. The span at valine 63–glutamate 74 shows a compositional bias: acidic residues.

The protein belongs to the brassicaceae elicitor peptide family.

In terms of biological role, elicitor of plant defense. The sequence is that of Elicitor peptide 6 (PEP6) from Arabidopsis thaliana (Mouse-ear cress).